A 445-amino-acid polypeptide reads, in one-letter code: Peptide chain release factor 1, mitochondrial (445 aa).

A mitochondrion-targeting transit peptide spans 1–61 (MNRHLCVWLF…LLSKNWSRRY (61 aa)). The tract at residues 297 to 361 (PKDLRIDTFR…LRARLYQQII (65 aa)) is GGQ domain. The GGQ signature appears at 311 to 313 (GGQ). The residue at position 313 (Q313) is an N5-methylglutamine.

This sequence belongs to the prokaryotic/mitochondrial release factor family. Methylation of glutamine in the GGQ triplet by HEMK1 is conserved from bacteria to mammals.

The protein localises to the mitochondrion. Mitochondrial peptide chain release factor that directs the termination of translation in response to the peptide chain non-canonical stop codons AGG and AGA. Non-canonical termination codons AGG and AGA are found at the end of MT-CO1/COX1 and MT-ND6/ND6 open reading frames, respectively. Recognizes non-canonical stop codons via a network of interactions between the codon, MTRF1 and the ribosomal RNA (rRNA): in contrast to other translation release factors, which identify the codon in the A-site via direct interactions of amino acid side chains with the bases, MTRF1 repositions the first 2 bases of the stop codon to use an intricate network of interactions that includes residues of the release factor, the rRNA of the small ribosomal subunit, as well as neighboring bases of the mRNA. The sequence is that of Peptide chain release factor 1, mitochondrial from Homo sapiens (Human).